Reading from the N-terminus, the 309-residue chain is (S)-sulfolactate dehydrogenase (309 aa).

Residues 151–152, Asp171, 231–233, and Asp257 contribute to the NAD(+) site; these read GI and TAR. Arg233 is a catalytic residue. Residue Glu262 is part of the active site. His281 acts as the Proton donor in catalysis. 281-284 contacts NAD(+); sequence HIAG.

Belongs to the D-isomer specific 2-hydroxyacid dehydrogenase family.

It catalyses the reaction (2S)-3-sulfolactate + NAD(+) = 3-sulfopyruvate + NADH + H(+). In terms of biological role, dehydrogenase of the (R,S)-sulfolactate degradation pathway that only acts on the (S)-enantiomer of 3-sulfolactate. Together with ComC, provides a racemase system that converts (2S)-3-sulfolactate to (2R)-3-sulfolactate, which is degraded further by (2R)-sulfolactate sulfo-lyase. Specific for NAD. Also able to form sulfolactate from sulfopyruvate. The chain is (S)-sulfolactate dehydrogenase (slcC) from Chromohalobacter salexigens (strain ATCC BAA-138 / DSM 3043 / CIP 106854 / NCIMB 13768 / 1H11).